Reading from the N-terminus, the 200-residue chain is Holliday junction branch migration complex subunit RuvA (200 aa).

The domain I stretch occupies residues 1–64 (MIGHLRGIIV…EDAHTLYGFH (64 aa)). The segment at 65–143 (NDHERRLFRA…RWHTNDTPSP (79 aa)) is domain II. The interval 133–152 (SRWHTNDTPSPEGLRSSNTQ) is disordered. A flexible linker region spans residues 144 to 148 (EGLRS). Residues 149 to 200 (SNTQPTQDAISALMALGYKPQEAKRAIDAIQKPDLSAETLIRLALKQMVLGT) are domain III.

The protein belongs to the RuvA family. Homotetramer. Forms an RuvA(8)-RuvB(12)-Holliday junction (HJ) complex. HJ DNA is sandwiched between 2 RuvA tetramers; dsDNA enters through RuvA and exits via RuvB. An RuvB hexamer assembles on each DNA strand where it exits the tetramer. Each RuvB hexamer is contacted by two RuvA subunits (via domain III) on 2 adjacent RuvB subunits; this complex drives branch migration. In the full resolvosome a probable DNA-RuvA(4)-RuvB(12)-RuvC(2) complex forms which resolves the HJ.

The protein localises to the cytoplasm. In terms of biological role, the RuvA-RuvB-RuvC complex processes Holliday junction (HJ) DNA during genetic recombination and DNA repair, while the RuvA-RuvB complex plays an important role in the rescue of blocked DNA replication forks via replication fork reversal (RFR). RuvA specifically binds to HJ cruciform DNA, conferring on it an open structure. The RuvB hexamer acts as an ATP-dependent pump, pulling dsDNA into and through the RuvAB complex. HJ branch migration allows RuvC to scan DNA until it finds its consensus sequence, where it cleaves and resolves the cruciform DNA. The polypeptide is Holliday junction branch migration complex subunit RuvA (Coxiella burnetii (strain Dugway 5J108-111)).